The primary structure comprises 87 residues: UPF0175 protein AF_0597 (87 aa).

The protein belongs to the UPF0175 family.

This Archaeoglobus fulgidus (strain ATCC 49558 / DSM 4304 / JCM 9628 / NBRC 100126 / VC-16) protein is UPF0175 protein AF_0597.